The following is a 331-amino-acid chain: Probable 5-dehydro-4-deoxyglucarate dehydratase 2 (331 aa).

The tract at residues methionine 1–threonine 23 is disordered. Residues aspartate 10–threonine 23 show a composition bias toward low complexity.

Belongs to the DapA family.

The enzyme catalyses 5-dehydro-4-deoxy-D-glucarate + H(+) = 2,5-dioxopentanoate + CO2 + H2O. It functions in the pathway carbohydrate acid metabolism; D-glucarate degradation; 2,5-dioxopentanoate from D-glucarate: step 2/2. The chain is Probable 5-dehydro-4-deoxyglucarate dehydratase 2 from Streptomyces avermitilis (strain ATCC 31267 / DSM 46492 / JCM 5070 / NBRC 14893 / NCIMB 12804 / NRRL 8165 / MA-4680).